A 271-amino-acid chain; its full sequence is Tryptophan synthase alpha chain (271 aa).

Catalysis depends on proton acceptor residues Glu-49 and Asp-60.

It belongs to the TrpA family. As to quaternary structure, tetramer of two alpha and two beta chains.

It catalyses the reaction (1S,2R)-1-C-(indol-3-yl)glycerol 3-phosphate + L-serine = D-glyceraldehyde 3-phosphate + L-tryptophan + H2O. It functions in the pathway amino-acid biosynthesis; L-tryptophan biosynthesis; L-tryptophan from chorismate: step 5/5. In terms of biological role, the alpha subunit is responsible for the aldol cleavage of indoleglycerol phosphate to indole and glyceraldehyde 3-phosphate. This chain is Tryptophan synthase alpha chain, found in Burkholderia pseudomallei (strain 1106a).